A 190-amino-acid polypeptide reads, in one-letter code: Shikimate kinase (190 aa).

19–24 (GSGKTT) is a binding site for ATP. Position 23 (Thr23) interacts with Mg(2+). Residues Asp41, Arg65, and Gly87 each contribute to the substrate site. Arg124 lines the ATP pocket. Residue Arg143 coordinates substrate.

The protein belongs to the shikimate kinase family. Monomer. Mg(2+) serves as cofactor.

The protein resides in the cytoplasm. It carries out the reaction shikimate + ATP = 3-phosphoshikimate + ADP + H(+). The protein operates within metabolic intermediate biosynthesis; chorismate biosynthesis; chorismate from D-erythrose 4-phosphate and phosphoenolpyruvate: step 5/7. In terms of biological role, catalyzes the specific phosphorylation of the 3-hydroxyl group of shikimic acid using ATP as a cosubstrate. The polypeptide is Shikimate kinase (Synechococcus sp. (strain ATCC 27144 / PCC 6301 / SAUG 1402/1) (Anacystis nidulans)).